A 298-amino-acid chain; its full sequence is Inosose dehydratase (298 aa).

This sequence belongs to the IolE/MocC family. It depends on glutathione as a cofactor. Co(2+) serves as cofactor. Requires Mn(2+) as cofactor.

The catalysed reaction is scyllo-inosose = 3D-3,5/4-trihydroxycyclohexane-1,2-dione + H2O. Catalyzes the dehydration of inosose (2-keto-myo-inositol, 2KMI or 2,4,6/3,5-pentahydroxycyclohexanone) to 3D-(3,5/4)-trihydroxycyclohexane-1,2-dione (D-2,3-diketo-4-deoxy-epi-inositol). This Yersinia enterocolitica serotype O:8 / biotype 1B (strain NCTC 13174 / 8081) protein is Inosose dehydratase.